Reading from the N-terminus, the 303-residue chain is tRNA pseudouridine synthase B (303 aa).

Catalysis depends on Asp38, which acts as the Nucleophile.

The protein belongs to the pseudouridine synthase TruB family. Type 1 subfamily.

It catalyses the reaction uridine(55) in tRNA = pseudouridine(55) in tRNA. Its function is as follows. Responsible for synthesis of pseudouridine from uracil-55 in the psi GC loop of transfer RNAs. The polypeptide is tRNA pseudouridine synthase B (Levilactobacillus brevis (strain ATCC 367 / BCRC 12310 / CIP 105137 / JCM 1170 / LMG 11437 / NCIMB 947 / NCTC 947) (Lactobacillus brevis)).